Consider the following 231-residue polypeptide: Dephospho-CoA kinase (231 aa).

A DPCK domain is found at Arg-29–Arg-231. Ala-37–Thr-42 contacts ATP.

This sequence belongs to the CoaE family.

Its subcellular location is the cytoplasm. It catalyses the reaction 3'-dephospho-CoA + ATP = ADP + CoA + H(+). It participates in cofactor biosynthesis; coenzyme A biosynthesis; CoA from (R)-pantothenate: step 5/5. In terms of biological role, catalyzes the phosphorylation of the 3'-hydroxyl group of dephosphocoenzyme A to form coenzyme A. This is Dephospho-CoA kinase from Cutibacterium acnes (strain DSM 16379 / KPA171202) (Propionibacterium acnes).